The following is a 197-amino-acid chain: MSEVKLAAEPRTEFGKGAARRIRRESKVPAVVYGHGAEPVHITLPGHELLLALRTPNVLLSLDIEGKAQLAIPKAVQRDAIKGFLEHVDLLLVRSGEKVNVEVYVHTEGDLAPGAYLLEHVLSTLTVEAEATHIPESVTVSIEGLEAGASILAKDIPLPSGTTLAIDEDAVVLQVLAAQAEEAAEEAAGTAEVGSEA.

The protein belongs to the bacterial ribosomal protein bL25 family. CTC subfamily. In terms of assembly, part of the 50S ribosomal subunit; part of the 5S rRNA/L5/L18/L25 subcomplex. Contacts the 5S rRNA. Binds to the 5S rRNA independently of L5 and L18.

In terms of biological role, this is one of the proteins that binds to the 5S RNA in the ribosome where it forms part of the central protuberance. This chain is Large ribosomal subunit protein bL25, found in Streptomyces avermitilis (strain ATCC 31267 / DSM 46492 / JCM 5070 / NBRC 14893 / NCIMB 12804 / NRRL 8165 / MA-4680).